The sequence spans 323 residues: Mycothiol acetyltransferase (323 aa).

N-acetyltransferase domains are found at residues 21–176 (ELLR…VSLR) and 173–323 (VSLR…LTKN). Glutamate 44 is a binding site for 1D-myo-inositol 2-(L-cysteinylamino)-2-deoxy-alpha-D-glucopyranoside. Acetyl-CoA is bound at residue 98-100 (LAV). Residues glutamate 200, lysine 240, and glutamate 253 each contribute to the 1D-myo-inositol 2-(L-cysteinylamino)-2-deoxy-alpha-D-glucopyranoside site. Acetyl-CoA contacts are provided by residues 257-259 (VGV) and 264-270 (QGLGLGK). Position 291 (tyrosine 291) interacts with 1D-myo-inositol 2-(L-cysteinylamino)-2-deoxy-alpha-D-glucopyranoside.

Belongs to the acetyltransferase family. MshD subfamily. Monomer.

It catalyses the reaction 1D-myo-inositol 2-(L-cysteinylamino)-2-deoxy-alpha-D-glucopyranoside + acetyl-CoA = mycothiol + CoA + H(+). In terms of biological role, catalyzes the transfer of acetyl from acetyl-CoA to desacetylmycothiol (Cys-GlcN-Ins) to form mycothiol. In Paenarthrobacter aurescens (strain TC1), this protein is Mycothiol acetyltransferase.